The following is a 188-amino-acid chain: CASP-like protein 4B1 (188 aa).

A disordered region spans residues 1–34; the sequence is MTNPDNMKPVEATDVESAAEKTSEPTPASGTSTI. The Cytoplasmic segment spans residues 1 to 46; the sequence is MTNPDNMKPVEATDVESAAEKTSEPTPASGTSTITQRWKREDLIKK. A compositionally biased stretch (polar residues) spans 24–34; the sequence is EPTPASGTSTI. The chain crosses the membrane as a helical span at residues 47–67; sequence ASPITRGICLLFSLIAFLIMV. Residues 68-84 lie on the Extracellular side of the membrane; the sequence is SNKHGYGRNFNDYEEYR. The helical transmembrane segment at 85–105 threads the bilayer; it reads YVLAISIISTLYTAWQTFAHF. Topologically, residues 106 to 124 are cytoplasmic; that stretch reads SKREIFDRRTSILVDFSGD. The chain crosses the membrane as a helical span at residues 125–145; that stretch reads QIVAYLLISAASSAIPLTNIF. Over 146 to 156 the chain is Extracellular; it reads REGQDNIFTDS. A helical transmembrane segment spans residues 157-177; that stretch reads AASAISMAIFAFIALALSALF. Over 178 to 188 the chain is Cytoplasmic; sequence SGYKLSTHSFI.

It belongs to the Casparian strip membrane proteins (CASP) family. As to quaternary structure, homodimer and heterodimers.

Its subcellular location is the cell membrane. In Arabidopsis thaliana (Mouse-ear cress), this protein is CASP-like protein 4B1.